The following is a 127-amino-acid chain: UPF0325 protein VP2321 (127 aa).

This sequence belongs to the UPF0325 family.

This is UPF0325 protein VP2321 from Vibrio parahaemolyticus serotype O3:K6 (strain RIMD 2210633).